Consider the following 717-residue polypeptide: Mitochondrial potassium channel ATP-binding subunit (717 aa).

A mitochondrion-targeting transit peptide spans 1–25 (MLVHLFRFGIRGGPVPGWSLQSLRF). The next 4 membrane-spanning stretches (helical) occupy residues 127-147 (LLAL…NVQI), 178-198 (VQLL…LVLL), 278-298 (LMLA…GSGL), and 365-385 (NIAF…LVAG). An ABC transmembrane type-1 domain is found at 132-419 (AAIVLALGAA…LSVLFGQVVR (288 aa)). Residues 454–691 (ITFQNVTFSY…GGLYSELIRR (238 aa)) form the ABC transporter domain. 489-496 (GQSGGGKT) lines the ATP pocket. The segment at 695-717 (DASLTSTPPAEKPEDPKSCQSKA) is disordered.

The protein belongs to the ABC transporter superfamily. ABCB family. Multidrug resistance exporter (TC 3.A.1.201) subfamily. The mitochondrial potassium channel (mitoK(ATP)) is composed of 4 subunits of CCDC51/MITOK and 4 subunits of ABCB8/MITOSUR. Interacts with PAAT. Interacts with NRP1; NRP1 regulates ABCB8/MITOSUR protein levels in mitochondria.

The protein localises to the mitochondrion inner membrane. Its activity is regulated as follows. Channel activity inhibited by ATP via ABCB8/MITOSUR subunit. Its function is as follows. ATP-binding subunit of the mitochondrial ATP-gated potassium channel (mitoK(ATP)). Together with pore-forming subunit CCDC51/MITOK of the mitoK(ATP) channel, mediates ATP-dependent potassium currents across the mitochondrial inner membrane. An increase in ATP intracellular levels closes the channel, inhibiting K(+) transport, whereas a decrease in ATP levels enhances K(+) uptake in the mitochondrial matrix. Plays a role in mitochondrial iron transport. Required for maintenance of normal cardiac function, possibly by influencing mitochondrial iron export and regulating the maturation of cytosolic iron sulfur cluster-containing enzymes. This is Mitochondrial potassium channel ATP-binding subunit from Mus musculus (Mouse).